A 260-amino-acid polypeptide reads, in one-letter code: Indole-3-glycerol phosphate synthase (260 aa).

This sequence belongs to the TrpC family.

It catalyses the reaction 1-(2-carboxyphenylamino)-1-deoxy-D-ribulose 5-phosphate + H(+) = (1S,2R)-1-C-(indol-3-yl)glycerol 3-phosphate + CO2 + H2O. Its pathway is amino-acid biosynthesis; L-tryptophan biosynthesis; L-tryptophan from chorismate: step 4/5. The sequence is that of Indole-3-glycerol phosphate synthase from Leifsonia xyli subsp. xyli (strain CTCB07).